We begin with the raw amino-acid sequence, 556 residues long: Glutamine--tRNA ligase (556 aa).

Positions 34–44 (PEPNGYLHIGH) match the 'HIGH' region motif. ATP-binding positions include 35 to 37 (EPN) and 41 to 47 (HIGHAKS). Residues Asp-67 and Tyr-212 each coordinate L-glutamine. Residues Thr-231, 261-262 (RL), and 269-271 (MSK) each bind ATP. A 'KMSKS' region motif is present at residues 268 to 272 (VMSKR).

This sequence belongs to the class-I aminoacyl-tRNA synthetase family. In terms of assembly, monomer.

The protein resides in the cytoplasm. It catalyses the reaction tRNA(Gln) + L-glutamine + ATP = L-glutaminyl-tRNA(Gln) + AMP + diphosphate. The polypeptide is Glutamine--tRNA ligase (Vibrio cholerae serotype O1 (strain ATCC 39315 / El Tor Inaba N16961)).